The primary structure comprises 300 residues: 33 kDa chaperonin (300 aa).

Cystine bridges form between cysteine 247-cysteine 249 and cysteine 280-cysteine 283.

It belongs to the HSP33 family. In terms of processing, under oxidizing conditions two disulfide bonds are formed involving the reactive cysteines. Under reducing conditions zinc is bound to the reactive cysteines and the protein is inactive.

Its subcellular location is the cytoplasm. Functionally, redox regulated molecular chaperone. Protects both thermally unfolding and oxidatively damaged proteins from irreversible aggregation. Plays an important role in the bacterial defense system toward oxidative stress. This is 33 kDa chaperonin from Prochlorococcus marinus subsp. pastoris (strain CCMP1986 / NIES-2087 / MED4).